The chain runs to 226 residues: MNLSFFDQFMSPVILGIPLIAIAMLDPFTLISWPIQSNGFNNRLITLQSWFLHNFTTIFYQLTSPGHKWALLLTSLMLLLMSLNLLGLLPYTFTPTTQLSLNMGLAVPLWLATVIMASKPTNYALGHLLPEGTPTPLIPVLIIIETISLFIRPLALGVRLTANLTAGHLLIQLIATAAFVLLSIMPTVAILTSIVLFLLTLLEIAVAMIQAYVFVLLLSLYLQENV.

6 helical membrane passes run 13-33 (VILG…LISW), 69-89 (WALL…LGLL), 97-117 (TQLS…VIMA), 138-158 (IPVL…ALGV), 179-199 (FVLL…LFLL), and 201-221 (LLEI…LSLY).

The protein belongs to the ATPase A chain family. Component of the ATP synthase complex composed at least of ATP5F1A/subunit alpha, ATP5F1B/subunit beta, ATP5MC1/subunit c (homooctomer), MT-ATP6/subunit a, MT-ATP8/subunit 8, ATP5ME/subunit e, ATP5MF/subunit f, ATP5MG/subunit g, ATP5MK/subunit k, ATP5MJ/subunit j, ATP5F1C/subunit gamma, ATP5F1D/subunit delta, ATP5F1E/subunit epsilon, ATP5PF/subunit F6, ATP5PB/subunit b, ATP5PD/subunit d, ATP5PO/subunit OSCP. ATP synthase complex consists of a soluble F(1) head domain (subunits alpha(3) and beta(3)) - the catalytic core - and a membrane F(0) domain - the membrane proton channel (subunits c, a, 8, e, f, g, k and j). These two domains are linked by a central stalk (subunits gamma, delta, and epsilon) rotating inside the F1 region and a stationary peripheral stalk (subunits F6, b, d, and OSCP). Interacts with DNAJC30; interaction is direct.

The protein resides in the mitochondrion inner membrane. The enzyme catalyses H(+)(in) = H(+)(out). Subunit a, of the mitochondrial membrane ATP synthase complex (F(1)F(0) ATP synthase or Complex V) that produces ATP from ADP in the presence of a proton gradient across the membrane which is generated by electron transport complexes of the respiratory chain. ATP synthase complex consist of a soluble F(1) head domain - the catalytic core - and a membrane F(1) domain - the membrane proton channel. These two domains are linked by a central stalk rotating inside the F(1) region and a stationary peripheral stalk. During catalysis, ATP synthesis in the catalytic domain of F(1) is coupled via a rotary mechanism of the central stalk subunits to proton translocation. With the subunit c (ATP5MC1), forms the proton-conducting channel in the F(0) domain, that contains two crucial half-channels (inlet and outlet) that facilitate proton movement from the mitochondrial intermembrane space (IMS) into the matrix. Protons are taken up via the inlet half-channel and released through the outlet half-channel, following a Grotthuss mechanism. The protein is ATP synthase F(0) complex subunit a of Xenopus laevis (African clawed frog).